Reading from the N-terminus, the 229-residue chain is ATP-dependent dethiobiotin synthetase BioD (229 aa).

Residue 12 to 17 participates in ATP binding; it reads GAGKTI. Threonine 16 is a binding site for Mg(2+). Residue lysine 38 is part of the active site. Residues aspartate 46, 105 to 108, and 165 to 166 each bind ATP; these read EGVG and SE. Positions 46 and 105 each coordinate Mg(2+).

The protein belongs to the dethiobiotin synthetase family. As to quaternary structure, homodimer. Mg(2+) serves as cofactor.

It localises to the cytoplasm. It carries out the reaction (7R,8S)-7,8-diammoniononanoate + CO2 + ATP = (4R,5S)-dethiobiotin + ADP + phosphate + 3 H(+). The catalysed reaction is (7R,8S)-8-amino-7-(carboxyamino)nonanoate + ATP = (4R,5S)-dethiobiotin + ADP + phosphate + H(+). The protein operates within cofactor biosynthesis; biotin biosynthesis; biotin from 7,8-diaminononanoate: step 1/2. Catalyzes a mechanistically unusual reaction, the ATP-dependent insertion of CO2 between the N7 and N8 nitrogen atoms of 7,8-diaminopelargonic acid (DAPA, also called 7,8-diammoniononanoate) to form a ureido ring. This cyanobacterium does not encode bioA (which catalyzes the formation of the precursor for this reaction in the cannonical pathway), instead it encodes bioU, which replaces bioA and also performs the first half of the cannonical BioD reaction. Thus in this organism BioD has a different substrate. The chain is ATP-dependent dethiobiotin synthetase BioD from Gloeobacter violaceus (strain ATCC 29082 / PCC 7421).